Here is a 160-residue protein sequence, read N- to C-terminus: Inner membrane protein YcdZ (160 aa).

5 helical membrane-spanning segments follow: residues 20-42 (WGAV…YFAC), 50-70 (LLIS…IIHG), 72-92 (ALAP…AFLM), 99-119 (LLLS…AGQG), and 123-143 (LVLP…NSGL).

To E.coli YahC.

The protein resides in the cell inner membrane. The polypeptide is Inner membrane protein YcdZ (ycdZ) (Salmonella typhimurium (strain LT2 / SGSC1412 / ATCC 700720)).